Reading from the N-terminus, the 142-residue chain is Putative pre-16S rRNA nuclease (142 aa).

The protein belongs to the YqgF nuclease family.

Its subcellular location is the cytoplasm. Its function is as follows. Could be a nuclease involved in processing of the 5'-end of pre-16S rRNA. The protein is Putative pre-16S rRNA nuclease of Blochmanniella floridana.